Reading from the N-terminus, the 718-residue chain is Probable glycerol-3-phosphate acyltransferase, mitochondrial (718 aa).

The HXXXXD motif signature appears at 167-172; it reads HRSHLD. The helical transmembrane segment at 409-425 threads the bilayer; the sequence is MMCSISPVAVVSCLLLA.

This sequence belongs to the GPAT/DAPAT family.

Its subcellular location is the mitochondrion membrane. It carries out the reaction sn-glycerol 3-phosphate + an acyl-CoA = a 1-acyl-sn-glycero-3-phosphate + CoA. It functions in the pathway phospholipid metabolism; CDP-diacylglycerol biosynthesis; CDP-diacylglycerol from sn-glycerol 3-phosphate: step 1/3. This is Probable glycerol-3-phosphate acyltransferase, mitochondrial (acl-6) from Caenorhabditis elegans.